The primary structure comprises 440 residues: Deoxyguanosinetriphosphate triphosphohydrolase-like protein (440 aa).

The HD domain occupies 61–256 (RLIHSLEVSC…MEAADDLCYS (196 aa)).

Belongs to the dGTPase family. Type 3 subfamily.

This is Deoxyguanosinetriphosphate triphosphohydrolase-like protein from Synechocystis sp. (strain ATCC 27184 / PCC 6803 / Kazusa).